The primary structure comprises 456 residues: tRNA-2-methylthio-N(6)-dimethylallyladenosine synthase (456 aa).

Positions 6 to 123 constitute an MTTase N-terminal domain; that stretch reads KHVYIETYGC…LPNLIEEAQR (118 aa). [4Fe-4S] cluster-binding residues include Cys15, Cys52, Cys86, Cys160, Cys164, and Cys167. The Radical SAM core domain occupies 146–380; it reads RAEGPTAYVS…RILEMAASIS (235 aa). A TRAM domain is found at 381–444; sequence EAMVGTEQWV…KNSLRGRLIE (64 aa).

It belongs to the methylthiotransferase family. MiaB subfamily. As to quaternary structure, monomer. The cofactor is [4Fe-4S] cluster.

It localises to the cytoplasm. It carries out the reaction N(6)-dimethylallyladenosine(37) in tRNA + (sulfur carrier)-SH + AH2 + 2 S-adenosyl-L-methionine = 2-methylsulfanyl-N(6)-dimethylallyladenosine(37) in tRNA + (sulfur carrier)-H + 5'-deoxyadenosine + L-methionine + A + S-adenosyl-L-homocysteine + 2 H(+). Its function is as follows. Catalyzes the methylthiolation of N6-(dimethylallyl)adenosine (i(6)A), leading to the formation of 2-methylthio-N6-(dimethylallyl)adenosine (ms(2)i(6)A) at position 37 in tRNAs that read codons beginning with uridine. In Dichelobacter nodosus (strain VCS1703A), this protein is tRNA-2-methylthio-N(6)-dimethylallyladenosine synthase.